The chain runs to 192 residues: MPPTAFALNDFITRFQLQLPPSLRPVHQQRQAAVLVPIICHPTPTLLLTRRSADLRKHAGQVAFPGGAADKTDRSIIETALREAQEEVAIPPENVQVLGVLPPLDSVSGFQVTPVVGLIAAQTRFHPNEDEVAELFEMPLDEAFALTRYYPLDIERKQQRHRVYLSWYQQQFVWGLTAAIIHQLALQISDRP.

Residues 29 to 160 enclose the Nudix hydrolase domain; it reads QRQAAVLVPI…PLDIERKQQR (132 aa). The Nudix box signature appears at 67–89; it reads GAADKTDRSIIETALREAQEEVA. Residues E83 and E87 each contribute to the Mg(2+) site.

This sequence belongs to the Nudix hydrolase family. PCD1 subfamily. Mn(2+) is required as a cofactor. Requires Mg(2+) as cofactor.

Functionally, probably mediates the hydrolysis of some nucleoside diphosphate derivatives. This is an uncharacterized protein from Pectobacterium atrosepticum (strain SCRI 1043 / ATCC BAA-672) (Erwinia carotovora subsp. atroseptica).